The chain runs to 434 residues: GTPase Obg (434 aa).

In terms of domain architecture, Obg spans 1–158; it reads MFLDTAKIKV…RELQLELKIL (158 aa). Residues 159–336 enclose the OBG-type G domain; that stretch reads ADVGLVGFPS…LLDATAELLD (178 aa). Residues 165-172, 190-194, 212-215, 282-285, and 317-319 each bind GTP; these read GFPSVGKS, FTTIV, DLPG, NKMD, and SGL. Positions 172 and 192 each coordinate Mg(2+). The OCT domain maps to 356 to 434; that stretch reads GFDEEEKAFE…IGKFEFEFVD (79 aa).

Belongs to the TRAFAC class OBG-HflX-like GTPase superfamily. OBG GTPase family. In terms of assembly, monomer. Mg(2+) serves as cofactor.

The protein localises to the cytoplasm. In terms of biological role, an essential GTPase which binds GTP, GDP and possibly (p)ppGpp with moderate affinity, with high nucleotide exchange rates and a fairly low GTP hydrolysis rate. Plays a role in control of the cell cycle, stress response, ribosome biogenesis and in those bacteria that undergo differentiation, in morphogenesis control. The sequence is that of GTPase Obg from Streptococcus pneumoniae (strain ATCC 700669 / Spain 23F-1).